The sequence spans 97 residues: Integration host factor subunit alpha (97 aa).

Belongs to the bacterial histone-like protein family. In terms of assembly, heterodimer of an alpha and a beta chain.

Functionally, this protein is one of the two subunits of integration host factor, a specific DNA-binding protein that functions in genetic recombination as well as in transcriptional and translational control. The protein is Integration host factor subunit alpha of Colwellia psychrerythraea (strain 34H / ATCC BAA-681) (Vibrio psychroerythus).